A 314-amino-acid chain; its full sequence is Oxidoreductase NAD-binding domain-containing protein 1 (314 aa).

The signal sequence occupies residues 1–18 (MALVAGSAAYQVLRGVTG). In terms of domain architecture, FAD-binding FR-type spans 63-166 (EIISPAKVCE…VGGEFCFDPQ (104 aa)). 180–185 (GVGINP) lines the NAD(+) pocket.

This is Oxidoreductase NAD-binding domain-containing protein 1 (oxnad1) from Xenopus tropicalis (Western clawed frog).